The sequence spans 530 residues: Autoinducer-2 kinase (530 aa).

It belongs to the FGGY kinase family.

The protein resides in the cytoplasm. The enzyme catalyses (S)-4,5-dihydroxypentane-2,3-dione + ATP = (2S)-2-hydroxy-3,4-dioxopentyl phosphate + ADP + H(+). In terms of biological role, catalyzes the phosphorylation of autoinducer-2 (AI-2) to phospho-AI-2, which subsequently inactivates the transcriptional regulator LsrR and leads to the transcription of the lsr operon. Phosphorylates the ring-open form of (S)-4,5-dihydroxypentane-2,3-dione (DPD), which is the precursor to all AI-2 signaling molecules, at the C5 position. In Escherichia coli (strain ATCC 8739 / DSM 1576 / NBRC 3972 / NCIMB 8545 / WDCM 00012 / Crooks), this protein is Autoinducer-2 kinase.